Consider the following 565-residue polypeptide: DNA-dependent metalloprotease SPRTN (565 aa).

The SprT-like domain maps to 23-130 (RALFLEFNDT…RTGANISVYH (108 aa)). Zn(2+) is bound at residue His-88. The active site involves Glu-89. Residues His-92 and His-107 each coordinate Zn(2+). The tract at residues 191–219 (EPENYPQKRKRKNDPTISEVNSSSHVKGK) is disordered. Polar residues predominate over residues 205 to 215 (PTISEVNSSSH). The short motif at 231–239 (FSGTGYKLF) is the SHP-box element. Positions 288–295 (STPAQSIL) match the PIP-box motif. Residues 349–389 (TLPSPSIQSTSQKPQKDISFGFTLPSQSFPSTSPGSNSENK) are disordered. Polar residues-rich tracts occupy residues 351–361 (PSPSIQSTSQK) and 372–386 (LPSQSFPSTSPGSNS). The UBZ4-type 1 zinc finger occupies 436–463 (KVSCPVCGTEVLECKINDHLDTCTSSGP). 4 residues coordinate Zn(2+): Cys-439, Cys-442, His-454, and Cys-458. Positions 476–499 (QSFPSTSQGSNSAIKEPLYKKLQI) match the Nuclear localization signal motif. A UBZ4-type 2 zinc finger spans residues 537–564 (KVCCPVCGTDVLQDKINDHLDTCLQNCN). 4 residues coordinate Zn(2+): Cys-540, Cys-543, His-555, and Cys-559.

This sequence belongs to the Spartan family. Homodimer. Zn(2+) serves as cofactor. Post-translationally, autocatalytically cleaved in response to double-stranded DNA-binding: autocatalytic cleavage takes place in trans and leads to inactivation.

The protein localises to the nucleus. The protein resides in the chromosome. With respect to regulation, DNA-binding activates the protease activity: single-stranded DNA-binding specifically activates ability to cleave covalent DNA-protein cross-links (DPCs). In contrast, double-stranded DNA-binding specifically activates autocatalytic cleavage, and subsequent inactivation. Functionally, DNA-dependent metalloendopeptidase that mediates the proteolytic cleavage of covalent DNA-protein cross-links (DPCs) during DNA synthesis, thereby playing a key role in maintaining genomic integrity. DPCs are highly toxic DNA lesions that interfere with essential chromatin transactions, such as replication and transcription, and which are induced by reactive agents, such as UV light or formaldehyde. Associates with the DNA replication machinery and specifically removes DPCs during DNA synthesis. Catalyzes proteolytic cleavage of the hmces DNA-protein cross-link following unfolding by the brip1/fancj helicase. Acts as a pleiotropic protease for DNA-binding proteins cross-linked with DNA, such as top1, top2a, histones H3 and H4. Mediates degradation of DPCs that are not ubiquitinated, while it is not able to degrade ubiquitinated DPCs. SPRTN activation requires polymerase collision with DPCs followed by helicase bypass of DPCs. May also act as a 'reader' of ubiquitinated pcna: facilitates chromatin association of rad18 and is required for efficient pcna monoubiquitination, promoting a feed-forward loop to enhance pcna ubiquitination and translesion DNA synthesis. Acts as a regulator of translesion DNA synthesis by recruiting vcp/p97 to sites of DNA damage. In Xenopus laevis (African clawed frog), this protein is DNA-dependent metalloprotease SPRTN.